We begin with the raw amino-acid sequence, 206 residues long: VEL1-related protein YOR387C (206 aa).

A signal peptide spans 1–19 (MSFLNIFTFFSVLVSVATA). N-linked (GlcNAc...) asparagine glycosylation is found at Asn-26, Asn-48, Asn-91, Asn-139, Asn-152, and Asn-183.

It belongs to the VEL1 family. N-glycosylated.

Its subcellular location is the cytoplasm. It localises to the cytosol. In Saccharomyces cerevisiae (strain ATCC 204508 / S288c) (Baker's yeast), this protein is VEL1-related protein YOR387C.